Here is a 645-residue protein sequence, read N- to C-terminus: Pro-neuregulin-1, membrane-bound isoform (645 aa).

A propeptide spanning residues 1–19 (MSERKEGRGKGKGKKKDRG) is cleaved from the precursor. The disordered stretch occupies residues 1–52 (MSERKEGRGKGKGKKKDRGSRGKPAPAEGDPSPALPPRLKEMKSQESAAGSK). At 20–247 (SRGKPAPAEG…MEAEELYQKR (228 aa)) the chain is on the extracellular side. Residues 37-128 (PRLKEMKSQE…GNDSASANIT (92 aa)) form the Ig-like C2-type domain. A disulfide bridge links Cys-57 with Cys-112. Over residues 139-164 (MSASTERPYVSSESPIRISVSTEGAN) the composition is skewed to polar residues. The interval 139–175 (MSASTERPYVSSESPIRISVSTEGANTSSSTSTSTTG) is disordered. Residues 165 to 175 (TSSSTSTSTTG) show a composition bias toward low complexity. Residues 178 to 222 (HLIKCAEKEKTFCVNGGECFMVKDLSNPSRYLCKCPNEFTGDRCQ) form the EGF-like domain. Cystine bridges form between Cys-182–Cys-196, Cys-190–Cys-210, and Cys-212–Cys-221. The helical transmembrane segment at 248–268 (VLTITGICIALLVVGIMCVVA) threads the bilayer. The Cytoplasmic segment spans residues 269–645 (YCKTKKQRQK…VIANQDPIAV (377 aa)). A compositionally biased stretch (low complexity) spans 340–355 (SHYTSTAHHSTTVTQT). 4 disordered regions span residues 340-364 (SHYT…SNGH), 380-406 (SVEN…PREC), 433-463 (MTTP…PVSS), and 531-593 (ETTQ…DTPF). Positions 392-402 (GPRGRLHGLGG) are enriched in gly residues. The span at 547–557 (TNSRRAKRTKP) shows a compositional bias: basic residues. Over residues 568–579 (DSNPSSVSSNSE) the composition is skewed to low complexity.

This sequence belongs to the neuregulin family. The cytoplasmic domain interacts with the LIM domain region of LIMK1. Forms a ternary complex with ERBB3 and ITGAV:ITGB3 or ITGA6:ITGB4. Interacts with NRDC and BACE1. Proteolytic cleavage close to the plasma membrane on the external face leads to the release of the soluble growth factor form. In terms of processing, N- and O-glycosylated. Extensive glycosylation precedes the proteolytic cleavage.

Its subcellular location is the cell membrane. The protein localises to the secreted. Functionally, direct ligand for ERBB3 and ERBB4 tyrosine kinase receptors. Concomitantly recruits ERBB1 and ERBB2 coreceptors, resulting in ligand-stimulated tyrosine phosphorylation and activation of the ERBB receptors. Perform diverse functions such as inducing growth and differentiation of epithelial, glial, neuronal, and skeletal muscle cells; inducing expression of acetylcholine receptor in synaptic vesicles during the formation of the neuromuscular junction; stimulating lobuloalveolar budding and milk production in the mammary gland and inducing differentiation of mammary tumor cells; stimulating Schwann cell proliferation; implication in the development of the myocardium such as trabeculation of the developing heart. Binds to ERBB4 and ERBB3. Acts as a ligand for integrins and binds (via EGF domain) to integrins ITGAV:ITGB3 or ITGA6:ITGB4. Its binding to integrins and subsequent ternary complex formation with integrins and ERRB3 are essential for NRG1-ERBB signaling. Induces the phosphorylation and activation of MAPK3/ERK1, MAPK1/ERK2 and AKT1, and ligand-dependent ERBB4 endocytosis is essential for the NRG1-mediated activation of these kinases in neurons. The polypeptide is Pro-neuregulin-1, membrane-bound isoform (Mus musculus (Mouse)).